The following is a 444-amino-acid chain: Tubulin beta chain (444 aa).

The GTP site is built by Q11, E69, S138, G142, T143, G144, N204, and N226. E69 provides a ligand contact to Mg(2+). The disordered stretch occupies residues 423 to 444; the sequence is QQYQDATAEEEGEFDDEEEMDV. Acidic residues predominate over residues 429 to 444; that stretch reads TAEEEGEFDDEEEMDV.

This sequence belongs to the tubulin family. In terms of assembly, dimer of alpha and beta chains. A typical microtubule is a hollow water-filled tube with an outer diameter of 25 nm and an inner diameter of 15 nM. Alpha-beta heterodimers associate head-to-tail to form protofilaments running lengthwise along the microtubule wall with the beta-tubulin subunit facing the microtubule plus end conferring a structural polarity. Microtubules usually have 13 protofilaments but different protofilament numbers can be found in some organisms and specialized cells. The cofactor is Mg(2+).

It is found in the cytoplasm. Its subcellular location is the cytoskeleton. Functionally, tubulin is the major constituent of microtubules, a cylinder consisting of laterally associated linear protofilaments composed of alpha- and beta-tubulin heterodimers. Microtubules grow by the addition of GTP-tubulin dimers to the microtubule end, where a stabilizing cap forms. Below the cap, tubulin dimers are in GDP-bound state, owing to GTPase activity of alpha-tubulin. The sequence is that of Tubulin beta chain from Euplotes focardii.